The following is a 349-amino-acid chain: MPMPPDDSALSLLPDHPLAAHNTFGIAARARFAARITQAAQFEALHRDPRVANLPQLVLGGGSNIVFTRDFDGVVLLDEIAGRRVVREDDDAWYVEAGGGENWHAFVAWTLEHGMPGLENLALIPGTVGAAPIQNIGAYGLEMKAYFDSLVAVELATGRRERFDAARCAFGYRDSFFKREGRGRFAIVAVTFRLPKQWTPRLGYADVTRELDARGITPEAATPRDVFDAVVAIRRAKLPDPLVLGNAGSFFKNPVIDAAQFDALRARAPDVVSYPQPDGQVKLAAGWLIDRCGWKGRALGAAAVHDRQALVLVNRGGATGADVLALARAIQADVRAQFGVELEAEPVCL.

An FAD-binding PCMH-type domain is found at Gly-25–Gln-197. The active site involves Arg-173. The active-site Proton donor is the Ser-249. Glu-345 is an active-site residue.

It belongs to the MurB family. FAD serves as cofactor.

The protein resides in the cytoplasm. It carries out the reaction UDP-N-acetyl-alpha-D-muramate + NADP(+) = UDP-N-acetyl-3-O-(1-carboxyvinyl)-alpha-D-glucosamine + NADPH + H(+). The protein operates within cell wall biogenesis; peptidoglycan biosynthesis. In terms of biological role, cell wall formation. The polypeptide is UDP-N-acetylenolpyruvoylglucosamine reductase (Burkholderia cenocepacia (strain HI2424)).